The sequence spans 86 residues: Large ribosomal subunit protein bL31B (86 aa).

This sequence belongs to the bacterial ribosomal protein bL31 family. Type B subfamily. In terms of assembly, part of the 50S ribosomal subunit.

This chain is Large ribosomal subunit protein bL31B, found in Vibrio parahaemolyticus serotype O3:K6 (strain RIMD 2210633).